Reading from the N-terminus, the 320-residue chain is Ribonuclease Z (320 aa).

7 residues coordinate Zn(2+): His-62, His-64, Asp-66, His-67, His-139, Asp-210, and His-268. The active-site Proton acceptor is the Asp-66.

The protein belongs to the RNase Z family. In terms of assembly, homodimer. Requires Zn(2+) as cofactor.

The catalysed reaction is Endonucleolytic cleavage of RNA, removing extra 3' nucleotides from tRNA precursor, generating 3' termini of tRNAs. A 3'-hydroxy group is left at the tRNA terminus and a 5'-phosphoryl group is left at the trailer molecule.. Functionally, zinc phosphodiesterase, which displays some tRNA 3'-processing endonuclease activity. Probably involved in tRNA maturation, by removing a 3'-trailer from precursor tRNA. This is Ribonuclease Z from Cyanothece sp. (strain PCC 7425 / ATCC 29141).